The primary structure comprises 157 residues: Phosphopantetheine adenylyltransferase (157 aa).

S9 is a substrate binding site. Residues 9–10 (SF) and H17 contribute to the ATP site. Positions 41, 73, and 87 each coordinate substrate. Residues 88–90 (GLR), E98, and 122–128 (YSFVSSS) each bind ATP.

It belongs to the bacterial CoaD family. As to quaternary structure, homohexamer. The cofactor is Mg(2+).

Its subcellular location is the cytoplasm. It carries out the reaction (R)-4'-phosphopantetheine + ATP + H(+) = 3'-dephospho-CoA + diphosphate. Its pathway is cofactor biosynthesis; coenzyme A biosynthesis; CoA from (R)-pantothenate: step 4/5. Its function is as follows. Reversibly transfers an adenylyl group from ATP to 4'-phosphopantetheine, yielding dephospho-CoA (dPCoA) and pyrophosphate. This chain is Phosphopantetheine adenylyltransferase, found in Mycobacterium marinum (strain ATCC BAA-535 / M).